The primary structure comprises 461 residues: Bifunctional protein GlmU (461 aa).

Residues 1–232 (MNLQIIILAA…SFEVQGINNR (232 aa)) form a pyrophosphorylase region. Residues 8–11 (LAAG), Lys-22, Gln-73, and 78–79 (GT) each bind UDP-N-acetyl-alpha-D-glucosamine. Asp-102 contributes to the Mg(2+) binding site. Gly-142, Glu-157, and Asn-230 together coordinate UDP-N-acetyl-alpha-D-glucosamine. Mg(2+) is bound at residue Asn-230. Positions 233–253 (QQLQQLERIWQQRAANQLMEK) are linker. The interval 254–461 (GATLADANRF…WKRPVKRERD (208 aa)) is N-acetyltransferase. UDP-N-acetyl-alpha-D-glucosamine is bound by residues Arg-336 and Lys-354. His-366 functions as the Proton acceptor in the catalytic mechanism. Residues Tyr-369 and Asn-380 each contribute to the UDP-N-acetyl-alpha-D-glucosamine site. Residues Ala-383, 389-390 (NY), Ser-408, and Ala-426 contribute to the acetyl-CoA site.

The protein in the N-terminal section; belongs to the N-acetylglucosamine-1-phosphate uridyltransferase family. It in the C-terminal section; belongs to the transferase hexapeptide repeat family. As to quaternary structure, homotrimer. Mg(2+) serves as cofactor.

It localises to the cytoplasm. It catalyses the reaction alpha-D-glucosamine 1-phosphate + acetyl-CoA = N-acetyl-alpha-D-glucosamine 1-phosphate + CoA + H(+). The catalysed reaction is N-acetyl-alpha-D-glucosamine 1-phosphate + UTP + H(+) = UDP-N-acetyl-alpha-D-glucosamine + diphosphate. It functions in the pathway nucleotide-sugar biosynthesis; UDP-N-acetyl-alpha-D-glucosamine biosynthesis; N-acetyl-alpha-D-glucosamine 1-phosphate from alpha-D-glucosamine 6-phosphate (route II): step 2/2. Its pathway is nucleotide-sugar biosynthesis; UDP-N-acetyl-alpha-D-glucosamine biosynthesis; UDP-N-acetyl-alpha-D-glucosamine from N-acetyl-alpha-D-glucosamine 1-phosphate: step 1/1. It participates in bacterial outer membrane biogenesis; LPS lipid A biosynthesis. Catalyzes the last two sequential reactions in the de novo biosynthetic pathway for UDP-N-acetylglucosamine (UDP-GlcNAc). The C-terminal domain catalyzes the transfer of acetyl group from acetyl coenzyme A to glucosamine-1-phosphate (GlcN-1-P) to produce N-acetylglucosamine-1-phosphate (GlcNAc-1-P), which is converted into UDP-GlcNAc by the transfer of uridine 5-monophosphate (from uridine 5-triphosphate), a reaction catalyzed by the N-terminal domain. In Legionella pneumophila (strain Corby), this protein is Bifunctional protein GlmU.